A 117-amino-acid chain; its full sequence is Large ribosomal subunit protein bL20 (117 aa).

This sequence belongs to the bacterial ribosomal protein bL20 family.

Functionally, binds directly to 23S ribosomal RNA and is necessary for the in vitro assembly process of the 50S ribosomal subunit. It is not involved in the protein synthesizing functions of that subunit. This Geobacter sulfurreducens (strain ATCC 51573 / DSM 12127 / PCA) protein is Large ribosomal subunit protein bL20.